Here is a 278-residue protein sequence, read N- to C-terminus: Large ribosomal subunit protein uL2 (278 aa).

The tract at residues 222–278 (GVVMNPVDHPHGGGEGRTSGGRHPVTPWGKPTKGAKTRKNKSTDKFIIRSRHERKKR) is disordered. The segment covering 269–278 (IRSRHERKKR) has biased composition (basic residues).

The protein belongs to the universal ribosomal protein uL2 family. As to quaternary structure, part of the 50S ribosomal subunit. Forms a bridge to the 30S subunit in the 70S ribosome.

Its function is as follows. One of the primary rRNA binding proteins. Required for association of the 30S and 50S subunits to form the 70S ribosome, for tRNA binding and peptide bond formation. It has been suggested to have peptidyltransferase activity; this is somewhat controversial. Makes several contacts with the 16S rRNA in the 70S ribosome. The chain is Large ribosomal subunit protein uL2 from Maricaulis maris (strain MCS10) (Caulobacter maris).